A 486-amino-acid polypeptide reads, in one-letter code: uncharacterized protein (486 aa).

Positions 1 to 25 (MGTMRSVYLIIIIILFFAFISLSFG) are cleaved as a signal peptide. 2 stretches are compositionally biased toward basic and acidic residues: residues 306-316 (KKEEKENEESS) and 326-349 (KKEE…KQEK). The segment at 306–349 (KKEEKENEESSKTINQMQRHKKEEKSQTQETKKPSKNEMNKQEK) is disordered.

This is an uncharacterized protein from Methanocaldococcus jannaschii (strain ATCC 43067 / DSM 2661 / JAL-1 / JCM 10045 / NBRC 100440) (Methanococcus jannaschii).